A 132-amino-acid chain; its full sequence is Fatty acid-binding protein, intestinal (132 aa).

Alanine 2 carries the N-acetylalanine modification. Positions 83 and 107 each coordinate hexadecanoate. 2 residues coordinate tetradecanoate: tryptophan 83 and arginine 107.

The protein belongs to the calycin superfamily. Fatty-acid binding protein (FABP) family. As to expression, expressed in the small intestine. Highest expression levels in the proximal ileum.

It is found in the cytoplasm. Its function is as follows. FABPs are thought to play a role in the intracellular transport of long-chain fatty acids and their acyl-CoA esters. FABP2 is probably involved in triglyceride-rich lipoprotein synthesis. Binds saturated long-chain fatty acids with a high affinity, but binds with a lower affinity to unsaturated long-chain fatty acids. FABP2 may also help maintain energy homeostasis by functioning as a lipid sensor. This is Fatty acid-binding protein, intestinal (Fabp2) from Mus musculus (Mouse).